A 459-amino-acid polypeptide reads, in one-letter code: Argininosuccinate lyase (459 aa).

The protein belongs to the lyase 1 family. Argininosuccinate lyase subfamily.

It is found in the cytoplasm. It carries out the reaction 2-(N(omega)-L-arginino)succinate = fumarate + L-arginine. It functions in the pathway amino-acid biosynthesis; L-arginine biosynthesis; L-arginine from L-ornithine and carbamoyl phosphate: step 3/3. This is Argininosuccinate lyase from Prochlorococcus marinus subsp. pastoris (strain CCMP1986 / NIES-2087 / MED4).